The sequence spans 143 residues: Sporulation-specific cell division protein SsgB (143 aa).

This sequence belongs to the SsgA family. As to quaternary structure, interacts with SsgA. Interacts with FtsZ (via N-terminus).

Its subcellular location is the cell septum. Functionally, involved in sporulation-specific cell division. Required for early stages of sporulation. Important in the process of growth cessation prior to sporulation-specific cell division. Recruits cell division protein FtsZ to the future septum sites and tethers the contractile ring structure (Z ring) to the cytoplasmic membrane during sporulation. Stimulates polymerization and filament length of FtsZ in vitro. The chain is Sporulation-specific cell division protein SsgB from Salinispora tropica (strain ATCC BAA-916 / DSM 44818 / JCM 13857 / NBRC 105044 / CNB-440).